Reading from the N-terminus, the 385-residue chain is Probable dual-specificity RNA methyltransferase RlmN (385 aa).

The segment at 1 to 35 (MNVKEPAEEAAIQLRTERQRIEPEGEEQSEQPTDL) is disordered. Glu121 (proton acceptor) is an active-site residue. Residues 132-367 (TRDRVTVCLS…AVIREERGQD (236 aa)) form the Radical SAM core domain. Cysteines 139 and 372 form a disulfide. Cys146, Cys150, and Cys153 together coordinate [4Fe-4S] cluster. S-adenosyl-L-methionine-binding positions include 198–199 (GE), Ser230, 253–255 (SLH), and Asn329. Residue Cys372 is the S-methylcysteine intermediate of the active site.

This sequence belongs to the radical SAM superfamily. RlmN family. [4Fe-4S] cluster is required as a cofactor.

It localises to the cytoplasm. The enzyme catalyses adenosine(2503) in 23S rRNA + 2 reduced [2Fe-2S]-[ferredoxin] + 2 S-adenosyl-L-methionine = 2-methyladenosine(2503) in 23S rRNA + 5'-deoxyadenosine + L-methionine + 2 oxidized [2Fe-2S]-[ferredoxin] + S-adenosyl-L-homocysteine. The catalysed reaction is adenosine(37) in tRNA + 2 reduced [2Fe-2S]-[ferredoxin] + 2 S-adenosyl-L-methionine = 2-methyladenosine(37) in tRNA + 5'-deoxyadenosine + L-methionine + 2 oxidized [2Fe-2S]-[ferredoxin] + S-adenosyl-L-homocysteine. In terms of biological role, specifically methylates position 2 of adenine 2503 in 23S rRNA and position 2 of adenine 37 in tRNAs. The polypeptide is Probable dual-specificity RNA methyltransferase RlmN (Heliobacterium modesticaldum (strain ATCC 51547 / Ice1)).